The sequence spans 681 residues: DNA ligase (681 aa).

NAD(+) contacts are provided by residues 32–36 (DIEYD), 81–82 (SL), and Glu113. Lys115 functions as the N6-AMP-lysine intermediate in the catalytic mechanism. 4 residues coordinate NAD(+): Arg136, Glu173, Lys290, and Lys314. Zn(2+) is bound by residues Cys408, Cys411, Cys426, and Cys432. The BRCT domain maps to 596–681 (EIDSPFAGKT…LNNHGDVSTL (86 aa)).

This sequence belongs to the NAD-dependent DNA ligase family. LigA subfamily. Mg(2+) is required as a cofactor. Requires Mn(2+) as cofactor.

It carries out the reaction NAD(+) + (deoxyribonucleotide)n-3'-hydroxyl + 5'-phospho-(deoxyribonucleotide)m = (deoxyribonucleotide)n+m + AMP + beta-nicotinamide D-nucleotide.. DNA ligase that catalyzes the formation of phosphodiester linkages between 5'-phosphoryl and 3'-hydroxyl groups in double-stranded DNA using NAD as a coenzyme and as the energy source for the reaction. It is essential for DNA replication and repair of damaged DNA. In Pectobacterium atrosepticum (strain SCRI 1043 / ATCC BAA-672) (Erwinia carotovora subsp. atroseptica), this protein is DNA ligase.